A 198-amino-acid chain; its full sequence is Recombination protein RecR (198 aa).

The segment at Cys-57 to Cys-72 adopts a C4-type zinc-finger fold. In terms of domain architecture, Toprim spans Arg-80 to Pro-175.

This sequence belongs to the RecR family.

Functionally, may play a role in DNA repair. It seems to be involved in an RecBC-independent recombinational process of DNA repair. It may act with RecF and RecO. This is Recombination protein RecR from Anaeromyxobacter sp. (strain Fw109-5).